Here is a 166-residue protein sequence, read N- to C-terminus: 2-C-methyl-D-erythritol 2,4-cyclodiphosphate synthase (166 aa).

2 residues coordinate a divalent metal cation: Asp15 and His17. Residues 15–17 (DIH) and 43–44 (HS) contribute to the 4-CDP-2-C-methyl-D-erythritol 2-phosphate site. His51 is an a divalent metal cation binding site. 4-CDP-2-C-methyl-D-erythritol 2-phosphate is bound by residues 65–67 (DIG), 141–144 (TTNE), and Arg151.

The protein belongs to the IspF family. As to quaternary structure, homotrimer. A divalent metal cation serves as cofactor.

It catalyses the reaction 4-CDP-2-C-methyl-D-erythritol 2-phosphate = 2-C-methyl-D-erythritol 2,4-cyclic diphosphate + CMP. The protein operates within isoprenoid biosynthesis; isopentenyl diphosphate biosynthesis via DXP pathway; isopentenyl diphosphate from 1-deoxy-D-xylulose 5-phosphate: step 4/6. Functionally, involved in the biosynthesis of isopentenyl diphosphate (IPP) and dimethylallyl diphosphate (DMAPP), two major building blocks of isoprenoid compounds. Catalyzes the conversion of 4-diphosphocytidyl-2-C-methyl-D-erythritol 2-phosphate (CDP-ME2P) to 2-C-methyl-D-erythritol 2,4-cyclodiphosphate (ME-CPP) with a corresponding release of cytidine 5-monophosphate (CMP). This Prochlorococcus marinus (strain MIT 9215) protein is 2-C-methyl-D-erythritol 2,4-cyclodiphosphate synthase.